We begin with the raw amino-acid sequence, 376 residues long: Putative 12-oxophytodienoate reductase 13 (376 aa).

FMN-binding positions include 25–27 (PLT), A58, and Q99. Position 165 to 168 (165 to 168 (HGAH)) interacts with substrate. FMN is bound by residues R217, G301, and 322–323 (GR).

This sequence belongs to the NADH:flavin oxidoreductase/NADH oxidase family. Requires FMN as cofactor.

Functionally, putative oxophytodienoate reductase that may be involved in the biosynthesis or metabolism of oxylipin signaling molecules. The chain is Putative 12-oxophytodienoate reductase 13 (OPR13) from Oryza sativa subsp. japonica (Rice).